Consider the following 99-residue polypeptide: uncharacterized protein (99 aa).

This sequence belongs to the ycf15 family.

The protein localises to the plastid. It is found in the chloroplast. This is an uncharacterized protein from Saccharum hybrid (Sugarcane).